Here is a 495-residue protein sequence, read N- to C-terminus: Amorpha-4,11-diene 12-monooxygenase (495 aa).

Residues 1-6 (MKSILK) lie on the Cytoplasmic side of the membrane. A helical; Signal-anchor for type II membrane protein membrane pass occupies residues 7 to 29 (AMALSLTTSIALATILLFVYKFA). The Lumenal segment spans residues 30–495 (TRSKSTKKSL…KTELLLVPSF (466 aa)). 5 N-linked (GlcNAc...) asparagine glycosylation sites follow: Asn-176, Asn-261, Asn-267, Asn-386, and Asn-417. Cys-439 contacts heme.

The protein belongs to the cytochrome P450 family. Requires heme as cofactor. Highly expressed both in apical and sub-apical cells of glandular secretory trichomes. Detected in flower buds, leaves and roots. Also present in non-glandular trichome cells.

The protein resides in the endoplasmic reticulum membrane. It carries out the reaction (+)-amorpha-4,11-diene + 3 reduced [NADPH--hemoprotein reductase] + 3 O2 = (+)-artemisinate + 3 oxidized [NADPH--hemoprotein reductase] + 4 H2O + 4 H(+). It participates in sesquiterpene biosynthesis. In terms of biological role, involved in the biosynthesis of the antimalarial endoperoxide artemisinin. Catalyzes three consecutive oxidations of amorpha-4,11-diene to produce artemisinic acid, with artemisinic alcohol and artemisinic aldehyde as intermediates products, but is unable to oxidize germacrene A. No activity with limonene, alpha-pinene, beta-pinene, pinocarveol, (-)-alloisolongifolene, caryophyllene, (-)-alpha-gurjunene, (+)-gamma-gurjunene, (+)-ledene, (+)-beta-selinene and (+)-valencene as substrates. This Artemisia annua (Sweet wormwood) protein is Amorpha-4,11-diene 12-monooxygenase.